The following is a 66-amino-acid chain: Large ribosomal subunit protein bL33c (66 aa).

The protein belongs to the bacterial ribosomal protein bL33 family.

It localises to the plastid. Its subcellular location is the chloroplast. In Welwitschia mirabilis (Tree tumbo), this protein is Large ribosomal subunit protein bL33c.